Reading from the N-terminus, the 63-residue chain is Large ribosomal subunit protein bL28 (63 aa).

The protein belongs to the bacterial ribosomal protein bL28 family.

This chain is Large ribosomal subunit protein bL28, found in Alkaliphilus oremlandii (strain OhILAs) (Clostridium oremlandii (strain OhILAs)).